Here is a 105-residue protein sequence, read N- to C-terminus: Pyrimidine/purine nucleoside phosphorylase (105 aa).

The protein belongs to the nucleoside phosphorylase PpnP family.

It carries out the reaction a purine D-ribonucleoside + phosphate = a purine nucleobase + alpha-D-ribose 1-phosphate. It catalyses the reaction adenosine + phosphate = alpha-D-ribose 1-phosphate + adenine. The catalysed reaction is cytidine + phosphate = cytosine + alpha-D-ribose 1-phosphate. The enzyme catalyses guanosine + phosphate = alpha-D-ribose 1-phosphate + guanine. It carries out the reaction inosine + phosphate = alpha-D-ribose 1-phosphate + hypoxanthine. It catalyses the reaction thymidine + phosphate = 2-deoxy-alpha-D-ribose 1-phosphate + thymine. The catalysed reaction is uridine + phosphate = alpha-D-ribose 1-phosphate + uracil. The enzyme catalyses xanthosine + phosphate = alpha-D-ribose 1-phosphate + xanthine. In terms of biological role, catalyzes the phosphorolysis of diverse nucleosides, yielding D-ribose 1-phosphate and the respective free bases. Can use uridine, adenosine, guanosine, cytidine, thymidine, inosine and xanthosine as substrates. Also catalyzes the reverse reactions. The polypeptide is Pyrimidine/purine nucleoside phosphorylase (Delftia acidovorans (strain DSM 14801 / SPH-1)).